Reading from the N-terminus, the 38-residue chain is Photosystem II reaction center protein L (38 aa).

A helical membrane pass occupies residues 17-37 (SLYWGLLLIFVLAVLFSSYIF).

This sequence belongs to the PsbL family. As to quaternary structure, PSII is composed of 1 copy each of membrane proteins PsbA, PsbB, PsbC, PsbD, PsbE, PsbF, PsbH, PsbI, PsbJ, PsbK, PsbL, PsbM, PsbT, PsbY, PsbZ, Psb30/Ycf12, at least 3 peripheral proteins of the oxygen-evolving complex and a large number of cofactors. It forms dimeric complexes.

It is found in the plastid. The protein localises to the chloroplast thylakoid membrane. In terms of biological role, one of the components of the core complex of photosystem II (PSII). PSII is a light-driven water:plastoquinone oxidoreductase that uses light energy to abstract electrons from H(2)O, generating O(2) and a proton gradient subsequently used for ATP formation. It consists of a core antenna complex that captures photons, and an electron transfer chain that converts photonic excitation into a charge separation. This subunit is found at the monomer-monomer interface and is required for correct PSII assembly and/or dimerization. The sequence is that of Photosystem II reaction center protein L from Euglena gracilis.